Consider the following 81-residue polypeptide: Alpha-toxin Ac1 (81 aa).

The first 17 residues, Y1–S17, serve as a signal peptide directing secretion. The LCN-type CS-alpha/beta domain maps to R19–T80. Disulfide bonds link C29–C79, C33–C51, C37–C61, and C41–C63.

Belongs to the long (4 C-C) scorpion toxin superfamily. Sodium channel inhibitor family. Alpha subfamily. As to expression, expressed by the venom gland.

Its subcellular location is the secreted. Functionally, alpha toxins bind voltage-independently at site-3 of sodium channels (Nav) and inhibit the inactivation of the activated channels, thereby blocking neuronal transmission. The polypeptide is Alpha-toxin Ac1 (Androctonus crassicauda (Arabian fat-tailed scorpion)).